A 127-amino-acid polypeptide reads, in one-letter code: Copper resistance protein C (127 aa).

The signal sequence occupies residues 1-25 (MFAFRSIATTVVMVAASLASASAFA). Residues histidine 26, methionine 65, methionine 68, methionine 71, methionine 76, and histidine 116 each contribute to the Cu cation site.

This sequence belongs to the CopC family.

The protein localises to the periplasm. Functionally, copper-binding protein involved in copper resistance. This is Copper resistance protein C from Xanthomonas campestris pv. juglandis (Xanthomonas arboricola pv. juglandis).